A 172-amino-acid polypeptide reads, in one-letter code: Adenine phosphoribosyltransferase (172 aa).

This sequence belongs to the purine/pyrimidine phosphoribosyltransferase family. Homodimer.

The protein resides in the cytoplasm. The enzyme catalyses AMP + diphosphate = 5-phospho-alpha-D-ribose 1-diphosphate + adenine. It participates in purine metabolism; AMP biosynthesis via salvage pathway; AMP from adenine: step 1/1. Functionally, catalyzes a salvage reaction resulting in the formation of AMP, that is energically less costly than de novo synthesis. The protein is Adenine phosphoribosyltransferase of Clostridium botulinum (strain ATCC 19397 / Type A).